A 92-amino-acid chain; its full sequence is Small ribosomal subunit protein uS19c (92 aa).

The protein belongs to the universal ribosomal protein uS19 family.

Its subcellular location is the plastid. The protein resides in the chloroplast. Its function is as follows. Protein S19 forms a complex with S13 that binds strongly to the 16S ribosomal RNA. The sequence is that of Small ribosomal subunit protein uS19c from Oedogonium cardiacum (Filamentous green alga).